The chain runs to 138 residues: Single-stranded DNA-binding protein 3 (138 aa).

The region spanning 1–104 (MINNIVLVGR…VVAENFQLLE (104 aa)) is the SSB domain. Positions 105–121 (SRNSQQQTNQSGNSSNS) are enriched in low complexity. A disordered region spans residues 105-138 (SRNSQQQTNQSGNSSNSYFGNANKMDISDDDLPF). An Important for interaction with partner proteins motif is present at residues 133 to 138 (DDDLPF).

Homotetramer.

Functionally, plays an important role in DNA replication, recombination and repair. Binds to ssDNA and to an array of partner proteins to recruit them to their sites of action during DNA metabolism. The sequence is that of Single-stranded DNA-binding protein 3 (ssb3) from Streptococcus agalactiae serotype V (strain ATCC BAA-611 / 2603 V/R).